The primary structure comprises 184 residues: ATP synthase subunit b, chloroplastic (184 aa).

Residues 27–49 traverse the membrane as a helical segment; sequence LATNPINLSVVLGVLIFFGKGVL.

This sequence belongs to the ATPase B chain family. In terms of assembly, F-type ATPases have 2 components, F(1) - the catalytic core - and F(0) - the membrane proton channel. F(1) has five subunits: alpha(3), beta(3), gamma(1), delta(1), epsilon(1). F(0) has four main subunits: a(1), b(1), b'(1) and c(10-14). The alpha and beta chains form an alternating ring which encloses part of the gamma chain. F(1) is attached to F(0) by a central stalk formed by the gamma and epsilon chains, while a peripheral stalk is formed by the delta, b and b' chains.

It is found in the plastid. The protein localises to the chloroplast thylakoid membrane. F(1)F(0) ATP synthase produces ATP from ADP in the presence of a proton or sodium gradient. F-type ATPases consist of two structural domains, F(1) containing the extramembraneous catalytic core and F(0) containing the membrane proton channel, linked together by a central stalk and a peripheral stalk. During catalysis, ATP synthesis in the catalytic domain of F(1) is coupled via a rotary mechanism of the central stalk subunits to proton translocation. Its function is as follows. Component of the F(0) channel, it forms part of the peripheral stalk, linking F(1) to F(0). The protein is ATP synthase subunit b, chloroplastic of Platanus occidentalis (Sycamore).